The chain runs to 616 residues: Dihydroxy-acid dehydratase (616 aa).

Aspartate 81 is a binding site for Mg(2+). Cysteine 122 is a [2Fe-2S] cluster binding site. Residues aspartate 123 and lysine 124 each contribute to the Mg(2+) site. Lysine 124 carries the N6-carboxylysine modification. Position 195 (cysteine 195) interacts with [2Fe-2S] cluster. Glutamate 491 is a binding site for Mg(2+). Residue serine 517 is the Proton acceptor of the active site.

The protein belongs to the IlvD/Edd family. Homodimer. It depends on [2Fe-2S] cluster as a cofactor. The cofactor is Mg(2+).

The enzyme catalyses (2R)-2,3-dihydroxy-3-methylbutanoate = 3-methyl-2-oxobutanoate + H2O. It carries out the reaction (2R,3R)-2,3-dihydroxy-3-methylpentanoate = (S)-3-methyl-2-oxopentanoate + H2O. Its pathway is amino-acid biosynthesis; L-isoleucine biosynthesis; L-isoleucine from 2-oxobutanoate: step 3/4. It participates in amino-acid biosynthesis; L-valine biosynthesis; L-valine from pyruvate: step 3/4. Its function is as follows. Functions in the biosynthesis of branched-chain amino acids. Catalyzes the dehydration of (2R,3R)-2,3-dihydroxy-3-methylpentanoate (2,3-dihydroxy-3-methylvalerate) into 2-oxo-3-methylpentanoate (2-oxo-3-methylvalerate) and of (2R)-2,3-dihydroxy-3-methylbutanoate (2,3-dihydroxyisovalerate) into 2-oxo-3-methylbutanoate (2-oxoisovalerate), the penultimate precursor to L-isoleucine and L-valine, respectively. This Blochmanniella pennsylvanica (strain BPEN) protein is Dihydroxy-acid dehydratase.